A 219-amino-acid polypeptide reads, in one-letter code: Ribose-5-phosphate isomerase A (219 aa).

Residues 28-31 (TGST), 81-84 (DSAD), and 94-97 (KGGG) each bind substrate. E103 functions as the Proton acceptor in the catalytic mechanism. K121 is a substrate binding site.

Belongs to the ribose 5-phosphate isomerase family. In terms of assembly, homodimer.

It carries out the reaction aldehydo-D-ribose 5-phosphate = D-ribulose 5-phosphate. It participates in carbohydrate degradation; pentose phosphate pathway; D-ribose 5-phosphate from D-ribulose 5-phosphate (non-oxidative stage): step 1/1. In terms of biological role, catalyzes the reversible conversion of ribose-5-phosphate to ribulose 5-phosphate. In Buchnera aphidicola subsp. Schizaphis graminum (strain Sg), this protein is Ribose-5-phosphate isomerase A.